Here is a 1252-residue protein sequence, read N- to C-terminus: HEAT repeat-containing protein 6 (1252 aa).

The HEAT 1 repeat unit spans residues 230–269; that stretch reads PDLLGKSGLLMKLSDVTHSDPEVRRAAVHCMANLCLSVPG. The disordered stretch occupies residues 365–417; that stretch reads DGRSPVKPQQPESSAARPSANKKKKYKVKPKKTQQGEKAEEEEPYGEVDAAPG. Basic residues predominate over residues 384-396; the sequence is ANKKKKYKVKPKK. Ser471 and Ser474 each carry phosphoserine. 3 HEAT repeats span residues 524 to 562, 586 to 624, and 630 to 667; these read ELGSPQSVSLMTLTLKDPSPKTRACALQVLSAILEGSKQ, SSIRELHRCLLLALVAESSSQTLTQIIKCLANLVSNAPY, and SLLTKVWNHIKPYIRHKDVNVRVSSLTLLGAVVSTHAP. Thr689 is subject to Phosphothreonine. Ser714 carries the post-translational modification Phosphoserine.

The polypeptide is HEAT repeat-containing protein 6 (Heatr6) (Rattus norvegicus (Rat)).